A 343-amino-acid polypeptide reads, in one-letter code: Dihydroorotase (343 aa).

Zn(2+) contacts are provided by His13 and His15. Residues 15–17 (HFR) and Asn41 each bind substrate. 3 residues coordinate Zn(2+): Lys98, His135, and His173. Position 98 is an N6-carboxylysine (Lys98). His135 contacts substrate. A substrate-binding site is contributed by Leu218. Residue Asp246 coordinates Zn(2+). Residue Asp246 is part of the active site. Positions 250 and 262 each coordinate substrate.

The protein belongs to the metallo-dependent hydrolases superfamily. DHOase family. Class II DHOase subfamily. As to quaternary structure, homodimer. Requires Zn(2+) as cofactor.

It carries out the reaction (S)-dihydroorotate + H2O = N-carbamoyl-L-aspartate + H(+). It functions in the pathway pyrimidine metabolism; UMP biosynthesis via de novo pathway; (S)-dihydroorotate from bicarbonate: step 3/3. In terms of biological role, catalyzes the reversible cyclization of carbamoyl aspartate to dihydroorotate. In Marinomonas sp. (strain MWYL1), this protein is Dihydroorotase.